We begin with the raw amino-acid sequence, 373 residues long: CXADR-like membrane protein (373 aa).

A signal peptide spans 1 to 18 (MSLLLLLLLVSYYVGTLG). Ig-like C2-type domains are found at residues 19–127 (THTE…VILK) and 135–224 (PKCE…VRVT). Over 19 to 235 (THTEIKRVAE…QYVQSIGMVA (217 aa)) the chain is Extracellular. 2 disulfides stabilise this stretch: C35-C111 and C153-C208. 2 N-linked (GlcNAc...) asparagine glycosylation sites follow: N74 and N197. Residues 236-256 (GAVTGIVAGALLIFLLVWLLI) form a helical membrane-spanning segment. At 257 to 373 (RRKDKERYEE…PSQSRAFQTV (117 aa)) the chain is on the cytoplasmic side. Positions 264–281 (YEEEERPNEIREDAEAPK) are enriched in basic and acidic residues. The disordered stretch occupies residues 264–373 (YEEEERPNEI…PSQSRAFQTV (110 aa)). Positions 288 to 314 (SSSSSGSRSSRSGSSSTRSTANSASRS) are enriched in low complexity. Residues 355-373 (KAETTPSMIPSQSRAFQTV) are compositionally biased toward polar residues.

Predominantly expressed in epithelial cells within different tissues and in the white adipose tissue. Expressed at high levels in small intestine and placenta, at intermediate levels in the heart, skeletal muscle, colon, spleen, kidney and lung and at low levels in the liver and peripheral blood leukocytes. Highly abundant in the intestine during embryo and fetal development (at protein level).

The protein resides in the cell junction. It localises to the tight junction. The protein localises to the cell membrane. Functionally, may be involved in the cell-cell adhesion. May play a role in adipocyte differentiation and development of obesity. Is required for normal small intestine development. The polypeptide is CXADR-like membrane protein (CLMP) (Homo sapiens (Human)).